The sequence spans 2344 residues: Peroxide stress-activated histidine kinase mak3 (2344 aa).

The Protein kinase domain maps to 1-295; it reads MYSQHELRNK…GIVNDLEACL (295 aa). 3 positions are modified to phosphoserine: S12, S16, and S17. Residues 486 to 503 are compositionally biased toward polar residues; sequence SGNTRKTSLLGSNHSSYS. Residues 486–506 form a disordered region; sequence SGNTRKTSLLGSNHSSYSDKL. TPR repeat units lie at residues 829–862 and 1340–1373; these read CHYL…IPHE and AFAF…YAAL. Residues 1730 to 1781 form the PAC domain; the sequence is FELEIRIKRKDGVYRWNLTRCTPTTNEKNRTSFLCATIDIDDQKKARATALE. A Histidine kinase domain is found at 1792–2018; sequence NISHELRTPF…TFKICYDLKI (227 aa). At H1795 the chain carries Phosphohistidine; by autocatalysis. Positions 2211–2333 constitute a Response regulatory domain; it reads KILIAEDNPI…TLIKMLLQYL (123 aa). Residue D2263 is modified to 4-aspartylphosphate.

The protein localises to the cytoplasm. The enzyme catalyses ATP + protein L-histidine = ADP + protein N-phospho-L-histidine.. Involved in the control of the SAPK-dependent transcriptional response to peroxide stress. Regulates sty1 activity. The sequence is that of Peroxide stress-activated histidine kinase mak3 (mak3) from Schizosaccharomyces pombe (strain 972 / ATCC 24843) (Fission yeast).